Consider the following 192-residue polypeptide: Imidazoleglycerol-phosphate dehydratase (192 aa).

This sequence belongs to the imidazoleglycerol-phosphate dehydratase family.

Its subcellular location is the cytoplasm. It carries out the reaction D-erythro-1-(imidazol-4-yl)glycerol 3-phosphate = 3-(imidazol-4-yl)-2-oxopropyl phosphate + H2O. The protein operates within amino-acid biosynthesis; L-histidine biosynthesis; L-histidine from 5-phospho-alpha-D-ribose 1-diphosphate: step 6/9. This is Imidazoleglycerol-phosphate dehydratase from Methanocella arvoryzae (strain DSM 22066 / NBRC 105507 / MRE50).